A 949-amino-acid chain; its full sequence is Bifunctional uridylyltransferase/uridylyl-removing enzyme (949 aa).

Residues 1-377 (MARHETSFPE…RFRNRVRKIP (377 aa)) form a uridylyltransferase region. The segment at 378–733 (GTLDFVDDGG…VRTHDFHAIT (356 aa)) is uridylyl-removing. An HD domain is found at 494–610 (VDEHLLRAVD…VDFAERVQSL (117 aa)). 2 ACT domains span residues 734 to 815 (EITV…DVIA) and 845 to 926 (VIEV…ERMP). Residues 925–949 (MPSGIIAPTPVPRASHGSKATKAET) form a disordered region.

It belongs to the GlnD family. Mg(2+) serves as cofactor.

The catalysed reaction is [protein-PII]-L-tyrosine + UTP = [protein-PII]-uridylyl-L-tyrosine + diphosphate. The enzyme catalyses [protein-PII]-uridylyl-L-tyrosine + H2O = [protein-PII]-L-tyrosine + UMP + H(+). Uridylyltransferase (UTase) activity is inhibited by glutamine, while glutamine activates uridylyl-removing (UR) activity. Modifies, by uridylylation and deuridylylation, the PII regulatory proteins (GlnB and homologs), in response to the nitrogen status of the cell that GlnD senses through the glutamine level. Under low glutamine levels, catalyzes the conversion of the PII proteins and UTP to PII-UMP and PPi, while under higher glutamine levels, GlnD hydrolyzes PII-UMP to PII and UMP (deuridylylation). Thus, controls uridylylation state and activity of the PII proteins, and plays an important role in the regulation of nitrogen fixation and metabolism. This Sinorhizobium medicae (strain WSM419) (Ensifer medicae) protein is Bifunctional uridylyltransferase/uridylyl-removing enzyme.